The following is a 241-amino-acid chain: Outer membrane protein A (241 aa).

5 consecutive transmembrane segments (beta stranded) span residues L1–P8, L13–G21, P46–A55, I60–Q67, and M86–R94. 4 repeat units span residues A105–P106, A107–P108, A109–P110, and A111–P112. A 4 X 2 AA tandem repeats of A-P region spans residues A105 to P112. Residues V114–V241 enclose the OmpA-like domain. A disulfide bridge connects residues C215 and C227.

The protein belongs to the outer membrane OOP (TC 1.B.6) superfamily. OmpA family. As to quaternary structure, monomer and homodimer.

The protein resides in the cell outer membrane. In terms of biological role, with TolR probably plays a role in maintaining the position of the peptidoglycan cell wall in the periplasm. Acts as a porin with low permeability that allows slow penetration of small solutes; an internal gate slows down solute passage. In Shimwellia blattae (Escherichia blattae), this protein is Outer membrane protein A.